We begin with the raw amino-acid sequence, 169 residues long: Small ribosomal subunit protein uS13m (169 aa).

Residues 149–169 form a disordered region; it reads KKLQEKKNKEQKKSQKCKTKK. Residues 150 to 161 are compositionally biased toward basic and acidic residues; the sequence is KLQEKKNKEQKK.

This sequence belongs to the universal ribosomal protein uS13 family. Part of the small ribosomal subunit.

The protein resides in the mitochondrion. Functionally, located at the top of the head of the small subunit, it contacts several helices of the small subunit rRNA. The sequence is that of Small ribosomal subunit protein uS13m (mrps13) from Dictyostelium discoideum (Social amoeba).